Here is a 124-residue protein sequence, read N- to C-terminus: uncharacterized protein (124 aa).

3 helical membrane-spanning segments follow: residues 14–34 (KAIV…YGWQ), 41–61 (FSYG…IIFY), and 85–105 (MVFI…AFFV).

It is found in the cell membrane. This is an uncharacterized protein from Haemophilus influenzae (strain ATCC 51907 / DSM 11121 / KW20 / Rd).